Here is a 128-residue protein sequence, read N- to C-terminus: UPF0102 protein BCG_2919c (128 aa).

It belongs to the UPF0102 family.

The chain is UPF0102 protein BCG_2919c from Mycobacterium bovis (strain BCG / Pasteur 1173P2).